The sequence spans 273 residues: Putative B3 domain-containing protein At5g58280 (273 aa).

Residues 127–218 (FVKSMVRSHV…KFKIYVFKGN (92 aa)) constitute a DNA-binding region (TF-B3). The segment at 225 to 273 (SARKRGRATTPSEEEEEEEDKDVEESGDEEHSSRATKRSSVRLLRKRKA) is disordered. Over residues 236 to 252 (SEEEEEEEDKDVEESGD) the composition is skewed to acidic residues. A compositionally biased stretch (basic residues) spans 258–273 (RATKRSSVRLLRKRKA).

The protein localises to the nucleus. This Arabidopsis thaliana (Mouse-ear cress) protein is Putative B3 domain-containing protein At5g58280.